The chain runs to 244 residues: Transforming protein v-Fos/v-Fox (244 aa).

The tract at residues 1-236 (DSLSYYHSPA…LFPASSGHSG (236 aa)) is transforming protein v-Fos. One can recognise a bZIP domain in the interval 113–176 (EVKRRIRRER…EKLEFILAAH (64 aa)). Residues 115-135 (KRRIRRERNKMAAAKCRNRRR) form a basic motif region. The segment at 141–169 (LQAETDQLEDEKSALQTEIANLLKEKEKL) is leucine-zipper. Positions 237–244 (FISMAGWQ) are transforming protein v-Fox.

Belongs to the bZIP family. Fos subfamily.

Its subcellular location is the host nucleus. This is Transforming protein v-Fos/v-Fox (FOS-FOX) from Mus musculus (Mouse).